The primary structure comprises 473 residues: Ribulose bisphosphate carboxylase large chain (473 aa).

The propeptide occupies 1 to 2 (MS). An N-acetylproline modification is found at P3. An N6,N6,N6-trimethyllysine modification is found at K14. Substrate contacts are provided by N123 and T173. The active-site Proton acceptor is K175. A substrate-binding site is contributed by K177. 3 residues coordinate Mg(2+): K201, D203, and E204. An N6-carboxylysine modification is found at K201. H294 functions as the Proton acceptor in the catalytic mechanism. Substrate-binding residues include R295, H327, and S379.

The protein belongs to the RuBisCO large chain family. Type I subfamily. In terms of assembly, heterohexadecamer of 8 large chains and 8 small chains; disulfide-linked. The disulfide link is formed within the large subunit homodimers. Mg(2+) serves as cofactor. Post-translationally, the disulfide bond which can form in the large chain dimeric partners within the hexadecamer appears to be associated with oxidative stress and protein turnover.

It is found in the plastid. Its subcellular location is the chloroplast. It carries out the reaction 2 (2R)-3-phosphoglycerate + 2 H(+) = D-ribulose 1,5-bisphosphate + CO2 + H2O. The catalysed reaction is D-ribulose 1,5-bisphosphate + O2 = 2-phosphoglycolate + (2R)-3-phosphoglycerate + 2 H(+). In terms of biological role, ruBisCO catalyzes two reactions: the carboxylation of D-ribulose 1,5-bisphosphate, the primary event in carbon dioxide fixation, as well as the oxidative fragmentation of the pentose substrate in the photorespiration process. Both reactions occur simultaneously and in competition at the same active site. The chain is Ribulose bisphosphate carboxylase large chain from Cajanus cajan (Pigeon pea).